A 674-amino-acid chain; its full sequence is Zinc finger protein 750 (674 aa).

Residues 25–51 form a CCHC-type zinc finger; it reads YKCFQCPFTCNEKSHLFNHMKYGLCKN. Cys27, Cys30, His43, and Cys49 together coordinate Zn(2+). Disordered regions lie at residues 105 to 125, 370 to 466, and 594 to 674; these read EAKE…KTTV, LAKN…QSHS, and TSSP…PRVS. 2 stretches are compositionally biased toward polar residues: residues 401-411 and 444-466; these read SPTNFTQSSQG and DSQT…QSHS.

The protein localises to the nucleus. Transcription factor involved in epidermis differentiation. The protein is Zinc finger protein 750 (znf750) of Xenopus laevis (African clawed frog).